An 85-amino-acid polypeptide reads, in one-letter code: High-potential iron-sulfur protein (85 aa).

4 residues coordinate [4Fe-4S] cluster: cysteine 43, cysteine 46, cysteine 63, and cysteine 77.

Belongs to the high-potential iron-sulfur protein (HiPIP) family. In terms of assembly, homodimer.

It is found in the periplasm. Functionally, specific class of high-redox-potential 4Fe-4S ferredoxins. Functions in anaerobic electron transport in most purple and in some other photosynthetic bacteria and in at least one genus (Paracoccus) of halophilic, denitrifying bacteria. This is High-potential iron-sulfur protein from Allochromatium warmingii (Chromatium warmingii).